We begin with the raw amino-acid sequence, 123 residues long: Small ribosomal subunit protein uS12c (123 aa).

Polar residues predominate over residues 1–20 (MPTIQQLIRNTRQPTQNRTK). A disordered region spans residues 1–27 (MPTIQQLIRNTRQPTQNRTKSPALKAC).

It belongs to the universal ribosomal protein uS12 family. In terms of assembly, part of the 30S ribosomal subunit.

It is found in the plastid. Its subcellular location is the chloroplast. In terms of biological role, with S4 and S5 plays an important role in translational accuracy. Located at the interface of the 30S and 50S subunits. This is Small ribosomal subunit protein uS12c (rps12) from Zygnema circumcarinatum (Green alga).